Reading from the N-terminus, the 521-residue chain is Probable xyloglucan galactosyltransferase GT14 (521 aa).

Residues 1-30 (MRPKNYSQMEKPISITTGKFRTNNNNNHNN) lie on the Cytoplasmic side of the membrane. The chain crosses the membrane as a helical; Signal-anchor for type II membrane protein span at residues 31 to 51 (VWFVVPLFFILCFVLLCFDYS). Residues 52 to 521 (ALFTDTDETA…SPYEEPQVLA (470 aa)) lie on the Lumenal side of the membrane. A disordered region spans residues 72–92 (TSSEFTKDDNFSRFPDDPSPD). Residues 76 to 87 (FTKDDNFSRFPD) show a composition bias toward basic and acidic residues. Residues N81, N177, N203, N249, N265, and N411 are each glycosylated (N-linked (GlcNAc...) asparagine). A disordered region spans residues 492-521 (RQGKDGSDGFDDRDDYKYTFSPYEEPQVLA).

The protein belongs to the glycosyltransferase 47 family. Expressed in roots, hypocotyls, cotyledons, leaves, stems, stamens and carpels.

Its subcellular location is the golgi apparatus membrane. Functions in xyloglucan synthesis by adding side chains to the xylosylated glucan backbone. Involved in the galactosylation of hemicellulose xyloglucan. The polypeptide is Probable xyloglucan galactosyltransferase GT14 (Arabidopsis thaliana (Mouse-ear cress)).